We begin with the raw amino-acid sequence, 427 residues long: Trigger factor (427 aa).

Positions 163–248 (GDIVVIDFAG…LKEIKRKELA (86 aa)) constitute a PPIase FKBP-type domain.

It belongs to the FKBP-type PPIase family. Tig subfamily.

The protein resides in the cytoplasm. The enzyme catalyses [protein]-peptidylproline (omega=180) = [protein]-peptidylproline (omega=0). Functionally, involved in protein export. Acts as a chaperone by maintaining the newly synthesized protein in an open conformation. Functions as a peptidyl-prolyl cis-trans isomerase. This is Trigger factor from Carboxydothermus hydrogenoformans (strain ATCC BAA-161 / DSM 6008 / Z-2901).